The sequence spans 88 residues: ATP synthase epsilon chain (88 aa).

The protein belongs to the ATPase epsilon chain family. F-type ATPases have 2 components, CF(1) - the catalytic core - and CF(0) - the membrane proton channel. CF(1) has five subunits: alpha(3), beta(3), gamma(1), delta(1), epsilon(1). CF(0) has three main subunits: a, b and c.

It is found in the cell inner membrane. In terms of biological role, produces ATP from ADP in the presence of a proton gradient across the membrane. The polypeptide is ATP synthase epsilon chain (atpC) (Chlorobaculum tepidum (strain ATCC 49652 / DSM 12025 / NBRC 103806 / TLS) (Chlorobium tepidum)).